A 258-amino-acid polypeptide reads, in one-letter code: Thyroxine 5-deiodinase (258 aa).

Residues 1-20 (AACILLFPRFLLTAVMLWLL) form a helical; Signal-anchor for type II membrane protein membrane-spanning segment. At 21–258 (DFLCIRKKML…QSPGAVVIQV (238 aa)) the chain is on the extracellular side. Residue U122 is part of the active site. U122 is a non-standard amino acid (selenocysteine).

Belongs to the iodothyronine deiodinase family. Monomer. Homodimer. May undergo minor heretodimerization with DIO1 and DIO2.

It is found in the cell membrane. It localises to the endosome membrane. The enzyme catalyses 3,3',5'-triiodo-L-thyronine + iodide + A + H(+) = L-thyroxine + AH2. It carries out the reaction 3,3'-diiodo-L-thyronine + iodide + A + H(+) = 3,3',5-triiodo-L-thyronine + AH2. The catalysed reaction is 3-iodo-L-thyronine + iodide + A + H(+) = 3,5-diiodo-L-thyronine + AH2. It catalyses the reaction L-thyronine + iodide + A + H(+) = 3-iodo-L-thyronine + AH2. The enzyme catalyses 3',5'-diiodo-L-thyronine + iodide + A + H(+) = 3,3',5'-triiodo-L-thyronine + AH2. It carries out the reaction 3'-iodo-L-thyronine + iodide + A + H(+) = 3,3'-diiodo-L-thyronine + AH2. The catalysed reaction is 3,3',5'-triiodothyronamine + iodide + A + H(+) = 3,3',5,5'-tetraiodothyronamine + AH2. It catalyses the reaction 3',5'-diiodothyronamine + iodide + A + H(+) = 3,3',5'-triiodothyronamine + AH2. The enzyme catalyses 3,3'-diiodothyronamine + iodide + A + H(+) = 3,3',5-triiodothyronamine + AH2. It carries out the reaction 3-iodothyronamine + iodide + A + H(+) = 3,5-diiodothyronamine + AH2. The catalysed reaction is 3'-iodothyronamine + iodide + A + H(+) = 3,3'-diiodothyronamine + AH2. It catalyses the reaction thyronamine + iodide + A + H(+) = 3-iodothyronamine + AH2. Plays a crucial role in the metabolism of thyroid hormones (TH) and has specific roles in TH activation and inactivation by deiodination. Catalyzes the deiodination of L-thyroxine (T4) to 3,3',5'-triiodothyronine (rT3) and 3,5,3'-triiodothyronine (T3) to 3,3'-diiodothyronine (3,3'-T2) via inner-ring deiodination (IRD). Catalyzes the deiodination of rT3 to 3',5'-diiodothyronine (3',5'-T2), 3,3'-T2 to 3'-monoiodothyronine (3'-T1) and 3,5-diiodothyronine (3,5-T2) to 3-monoiodothyronine (3-T1) via IRD. Catalyzes the deiodination of 3-T1 to L-thyronine (T0) via outer-ring deiodination (ORD). Catalyzes the tyrosyl ring deiodinations of 3,3',5,5'-tetraiodothyronamine, 3,3',5'-triiodothyronamine, 3,5,3'-triiodothyronamine, 3,5-diiodothyronamine, 3,3'-diiodothyronamine and 3-iodothyronamine. The sequence is that of Thyroxine 5-deiodinase (DIO3) from Gallus gallus (Chicken).